The primary structure comprises 155 residues: NADH-ubiquinone oxidoreductase chain 6 (155 aa).

The next 4 membrane-spanning stretches (helical) occupy residues 10-30 (ILAIGLLSPVQSIVCLIVLFV), 43-63 (LMGILYVLIYVGAIAILFLFI), 75-95 (GTIHPLIFTILIICLIPLDLS), and 133-153 (AIPMILIGLILILSVIGAIAI).

The protein belongs to the complex I subunit 6 family.

The protein localises to the mitochondrion membrane. It catalyses the reaction a ubiquinone + NADH + 5 H(+)(in) = a ubiquinol + NAD(+) + 4 H(+)(out). Core subunit of the mitochondrial membrane respiratory chain NADH dehydrogenase (Complex I) that is believed to belong to the minimal assembly required for catalysis. Complex I functions in the transfer of electrons from NADH to the respiratory chain. The immediate electron acceptor for the enzyme is believed to be ubiquinone. This chain is NADH-ubiquinone oxidoreductase chain 6 (ND6), found in Candida parapsilosis (Yeast).